The primary structure comprises 371 residues: Probable beta-1,4-xylosyltransferase GT43A (371 aa).

At M1 to H19 the chain is on the cytoplasmic side. The helical; Signal-anchor for type II membrane protein transmembrane segment at L20 to P42 threads the bilayer. The Lumenal segment spans residues S43–R371. Residues N176 and N299 are each glycosylated (N-linked (GlcNAc...) asparagine).

This sequence belongs to the glycosyltransferase 43 family.

The protein localises to the golgi apparatus membrane. Its function is as follows. Probable beta-1,4-xylosyltransferase involved in xylan biosynthesis in cell walls. The chain is Probable beta-1,4-xylosyltransferase GT43A from Oryza sativa subsp. japonica (Rice).